Reading from the N-terminus, the 540-residue chain is Mitochondrial distribution and morphology protein 34 (540 aa).

The SMP-LTD domain occupies 1 to 208 (MSFKFNSGTF…LPSVIFNMSQ (208 aa)). Disordered stretches follow at residues 26 to 51 (ALNP…KKPK) and 379 to 399 (RSKS…SGSL). Positions 35–44 (PESTSGQDGS) are enriched in polar residues.

The protein belongs to the MDM34 family. Component of the ER-mitochondria encounter structure (ERMES) or MDM complex, composed of MMM1, MDM10, MDM12 and MDM34.

The protein resides in the mitochondrion outer membrane. Functionally, component of the ERMES/MDM complex, which serves as a molecular tether to connect the endoplasmic reticulum (ER) and mitochondria. Components of this complex are involved in the control of mitochondrial shape and protein biogenesis, and function in nonvesicular lipid trafficking between the ER and mitochondria. MDM34 is required for the interaction of the ER-resident membrane protein MMM1 and the outer mitochondrial membrane-resident beta-barrel protein MDM10. The chain is Mitochondrial distribution and morphology protein 34 from Kluyveromyces lactis (strain ATCC 8585 / CBS 2359 / DSM 70799 / NBRC 1267 / NRRL Y-1140 / WM37) (Yeast).